Reading from the N-terminus, the 96-residue chain is Co-chaperonin GroES (96 aa).

It belongs to the GroES chaperonin family. Heptamer of 7 subunits arranged in a ring. Interacts with the chaperonin GroEL.

It localises to the cytoplasm. Functionally, together with the chaperonin GroEL, plays an essential role in assisting protein folding. The GroEL-GroES system forms a nano-cage that allows encapsulation of the non-native substrate proteins and provides a physical environment optimized to promote and accelerate protein folding. GroES binds to the apical surface of the GroEL ring, thereby capping the opening of the GroEL channel. The protein is Co-chaperonin GroES of Buchnera aphidicola subsp. Myzus persicae (Myzus persicae primary endosymbiont).